The sequence spans 119 residues: C-C motif chemokine 24 (119 aa).

An N-terminal signal peptide occupies residues 1–26 (MAGLMTIVTSLLFLGVCAHHIIPTGS). Disulfide bonds link Cys-33-Cys-58 and Cys-34-Cys-74. Asn-115 is a glycosylation site (N-linked (GlcNAc...) asparagine).

This sequence belongs to the intercrine beta (chemokine CC) family. N-glycosylated. In terms of tissue distribution, activated monocytes and activated T lymphocytes.

The protein resides in the secreted. Its function is as follows. Chemotactic for resting T-lymphocytes, and eosinophils. Has lower chemotactic activity for neutrophils but none for monocytes and activated lymphocytes. Is a strong suppressor of colony formation by a multipotential hematopoietic progenitor cell line. Binds to CCR3. In Homo sapiens (Human), this protein is C-C motif chemokine 24.